The primary structure comprises 295 residues: uncharacterized protein (295 aa).

Residues 4–233 (IVVKSMAMEK…LQNTIERLVL (230 aa)) enclose the Sigma-54 factor interaction domain.

This is an uncharacterized protein from Pseudomonas sp. (strain NS671).